The sequence spans 624 residues: Laccase-1 (624 aa).

An N-terminal signal peptide occupies residues 1 to 20; sequence MRGLAKLFFLSCSFVSLVSS. Plastocyanin-like domains lie at 72–183 and 195–343; these read FASP…HSPN and DRIV…CMFG. The Cu cation site is built by His117 and His119. An intrachain disulfide couples Cys138 to Cys578. A glycan (N-linked (GlcNAc...) asparagine) is linked at Asn149. Residues His162 and His164 each coordinate Cu cation. N-linked (GlcNAc...) asparagine glycans are attached at residues Asn242 and Asn430. Positions 469 to 562 constitute a Plastocyanin-like 3 domain; sequence IIINNLDTVI…GKLAVIVVQP (94 aa). Residues His480, His483, and His485 each contribute to the Cu cation site. A glycan (N-linked (GlcNAc...) asparagine) is linked at Asn503. Residues His543, Cys544, His545, and His549 each contribute to the Cu cation site. Residues 579–604 form a disordered region; the sequence is ANTDPNAFGPAKRSSSPSIQSSKTSS. Positions 592-604 are enriched in low complexity; it reads SSSPSIQSSKTSS.

It belongs to the multicopper oxidase family. The cofactor is Cu cation.

It localises to the secreted. The protein resides in the cell wall. It carries out the reaction 4 hydroquinone + O2 = 4 benzosemiquinone + 2 H2O. Its function is as follows. Laccase that catalyzes the oxidation of certain aromatic compounds, including L-dopa, to quinones, which then polymerize to melanin. Able to oxidize a wide variety of aromatic diphenol and diamino groups in the ortho, meta, and para positions but not monophenolic groups such as in phenol, tyramine, or tyrosine. Plays an important role in virulence. Plays a role in dissemination to extrapulmonary sites but is not involved in pulmonary growth or in elicitation of cellular immune responses in the lung. This is Laccase-1 from Cryptococcus neoformans var. neoformans serotype D (strain B-3501A) (Filobasidiella neoformans).